Reading from the N-terminus, the 963-residue chain is Importin-13 (963 aa).

20 HEAT repeats span residues 24–54 (ENVE…QAQV), 56–88 (PQAW…KISR), 95–135 (TDQY…LSMM), 142–179 (AVAD…EFQT), 194–231 (LAVE…SWVQ), 236–268 (LQDC…NAIS), 276–325 (VNTL…ALLD), 330–372 (WQSF…DDIL), 375–438 (EAEK…YEML), 440–476 (AELL…FQSI), 487–522 (VVPG…WLAD), 524–558 (PVMI…CREC), 562–600 (LPPY…LLSA), 603–648 (VEEI…SNLF), 676–716 (PVVV…VKTL), 720–754 (FAPM…VHIF), 761–803 (FPPI…ALKR), 815–845 (VKAV…TELL), 860–893 (EDGR…FALN), and 897–931 (FSLL…QQIL). The Importin N-terminal domain maps to 45–111 (AQKWLMQAQV…KAQLFTQITR (67 aa)).

The protein belongs to the importin beta family. As to quaternary structure, interacts with UBC9, RAN, RBM8A, eIF-1A and PAX6. As to expression, expressed in fetal brain, heart, intestine and kidney.

It is found in the cytoplasm. It localises to the nucleus. Functionally, functions in nuclear protein import as nuclear transport receptor. Serves as receptor for nuclear localization signals (NLS) in cargo substrates. Is thought to mediate docking of the importin/substrate complex to the nuclear pore complex (NPC) through binding to nucleoporin and the complex is subsequently translocated through the pore by an energy requiring, Ran-dependent mechanism. At the nucleoplasmic side of the NPC, Ran binds to the importin, the importin/substrate complex dissociates and importin is re-exported from the nucleus to the cytoplasm where GTP hydrolysis releases Ran. The directionality of nuclear import is thought to be conferred by an asymmetric distribution of the GTP- and GDP-bound forms of Ran between the cytoplasm and nucleus. Mediates the nuclear import of UBC9, the RBM8A/MAGOH complex, PAX6 and probably other members of the paired homeobox family. Also mediates nuclear export of eIF-1A, and the cytoplasmic release of eIF-1A is triggered by the loading of import substrates onto IPO13. In Homo sapiens (Human), this protein is Importin-13 (IPO13).